A 245-amino-acid polypeptide reads, in one-letter code: 3-deoxy-manno-octulosonate cytidylyltransferase (245 aa).

It belongs to the KdsB family.

It localises to the cytoplasm. The enzyme catalyses 3-deoxy-alpha-D-manno-oct-2-ulosonate + CTP = CMP-3-deoxy-beta-D-manno-octulosonate + diphosphate. It functions in the pathway nucleotide-sugar biosynthesis; CMP-3-deoxy-D-manno-octulosonate biosynthesis; CMP-3-deoxy-D-manno-octulosonate from 3-deoxy-D-manno-octulosonate and CTP: step 1/1. It participates in bacterial outer membrane biogenesis; lipopolysaccharide biosynthesis. Its function is as follows. Activates KDO (a required 8-carbon sugar) for incorporation into bacterial lipopolysaccharide in Gram-negative bacteria. The polypeptide is 3-deoxy-manno-octulosonate cytidylyltransferase (Rhodopseudomonas palustris (strain BisB5)).